A 558-amino-acid polypeptide reads, in one-letter code: 2-hydroxy-7-methoxy-5-methyl-1-naphthoate--CoA ligase (558 aa).

ATP is bound by residues 212–213 (GG), 329–331 (ASR), valine 351, aspartate 435, arginine 450, and lysine 542.

Belongs to the ATP-dependent AMP-binding enzyme family.

It carries out the reaction 2-hydroxy-7-methoxy-5-methyl-1-naphthoate + ATP + CoA = 2-hydroxy-7-methoxy-5-methyl-1-naphthoyl-CoA + AMP + diphosphate. It functions in the pathway antibiotic biosynthesis. In terms of biological role, catalyzes the activation of 2-hydroxy-7-methoxy-5-methyl-1-naphthoate in the biosynthesis of the naphthoate moiety of the neocarzinostatin chromophore. Also catalyzes the activation of other 1-naphthoic acid analogs such as 2-hydroxy-5-methyl-1-naphthoate or 2,7-dihydroxy-5-methyl-1-naphthoate in vitro. This Streptomyces carzinostaticus protein is 2-hydroxy-7-methoxy-5-methyl-1-naphthoate--CoA ligase.